Here is a 1218-residue protein sequence, read N- to C-terminus: DNA-directed RNA polymerase subunit beta' (1218 aa).

4 residues coordinate Zn(2+): cysteine 60, cysteine 62, cysteine 75, and cysteine 78. Residues aspartate 455, aspartate 457, and aspartate 459 each contribute to the Mg(2+) site. The Zn(2+) site is built by cysteine 824, cysteine 897, cysteine 904, and cysteine 907. Positions 1195-1218 (ENEAQSDKSQDEQEIGEITVDMGE) are disordered.

It belongs to the RNA polymerase beta' chain family. The RNAP catalytic core consists of 2 alpha, 1 beta, 1 beta' and 1 omega subunit. When a sigma factor is associated with the core the holoenzyme is formed, which can initiate transcription. Requires Mg(2+) as cofactor. Zn(2+) is required as a cofactor.

It carries out the reaction RNA(n) + a ribonucleoside 5'-triphosphate = RNA(n+1) + diphosphate. Its function is as follows. DNA-dependent RNA polymerase catalyzes the transcription of DNA into RNA using the four ribonucleoside triphosphates as substrates. This is DNA-directed RNA polymerase subunit beta' from Natranaerobius thermophilus (strain ATCC BAA-1301 / DSM 18059 / JW/NM-WN-LF).